Consider the following 356-residue polypeptide: Methylthioribose-1-phosphate isomerase (356 aa).

The active-site Proton donor is aspartate 234.

This sequence belongs to the eIF-2B alpha/beta/delta subunits family. MtnA subfamily.

It is found in the cytoplasm. The protein resides in the nucleus. It carries out the reaction 5-(methylsulfanyl)-alpha-D-ribose 1-phosphate = 5-(methylsulfanyl)-D-ribulose 1-phosphate. The protein operates within amino-acid biosynthesis; L-methionine biosynthesis via salvage pathway; L-methionine from S-methyl-5-thio-alpha-D-ribose 1-phosphate: step 1/6. Catalyzes the interconversion of methylthioribose-1-phosphate (MTR-1-P) into methylthioribulose-1-phosphate (MTRu-1-P). The chain is Methylthioribose-1-phosphate isomerase (mri1) from Schizosaccharomyces japonicus (strain yFS275 / FY16936) (Fission yeast).